The following is a 336-amino-acid chain: uncharacterized protein (336 aa).

Residues 123 to 323 (KTLMRDSGVP…YSSLINGILD (201 aa)) form the ATP-grasp domain.

It belongs to the D-alanine--D-alanine ligase family.

Could be involved in the biosynthesis of a cell wall component. This is an uncharacterized protein from Sinorhizobium fredii (strain NBRC 101917 / NGR234).